We begin with the raw amino-acid sequence, 415 residues long: Sphingomyelin synthase-related protein 1 (415 aa).

Residues 12 to 78 (WTTKHVAVWL…MLSVRKLQKI (67 aa)) form the SAM domain. 4 consecutive transmembrane segments (helical) span residues 153–173 (ILSC…MVIV), 201–221 (FAMT…VLLL), 232–252 (LCSL…VTSL), and 277–297 (FAIW…GDYM). Residue histidine 301 is part of the active site. A helical membrane pass occupies residues 322–342 (FLHTLSWVLNLFGIFFILAAH). Residues histidine 344 and aspartate 348 contribute to the active site. Residues 347–367 (IDVFIAFYITTRLFLYYHTLA) traverse the membrane as a helical segment. Topologically, residues 368–415 (NTRAYQQSRRARIWFPMFSFFECNVNGTVPNEYCWPFSKPAIMKRLIG) are cytoplasmic.

Belongs to the sphingomyelin synthase family.

Its subcellular location is the endoplasmic reticulum membrane. It carries out the reaction an N-acylsphing-4-enine + a 1,2-diacyl-sn-glycero-3-phosphoethanolamine = an N-acylsphing-4-enine 1-phosphoethanolamine + a 1,2-diacyl-sn-glycerol. It catalyses the reaction an N-acylsphinganine + a 1,2-diacyl-sn-glycero-3-phosphoethanolamine = an N-acylsphinganine-1-phosphoethanolamine + a 1,2-diacyl-sn-glycerol. The catalysed reaction is an N-acyl-(4R)-4-hydroxysphinganine + a 1,2-diacyl-sn-glycero-3-phosphoethanolamine = an N-acyl-(4R)-4-hydroxysphinganine-1-phosphoethanolamine + a 1,2-diacyl-sn-glycerol. The enzyme catalyses N-hexadecanoylsphinganine + a 1,2-diacyl-sn-glycero-3-phosphoethanolamine = N-hexadecanoyl-sphinganine-1-phosphoethanolamine + a 1,2-diacyl-sn-glycerol. It carries out the reaction N-hexadecanoyl-(4R)-hydroxysphinganine + a 1,2-diacyl-sn-glycero-3-phosphoethanolamine = N-hexadecanoyl-(4R)-hydroxysphinganine-1-phosphoethanolamine + a 1,2-diacyl-sn-glycerol. Its pathway is sphingolipid metabolism. In terms of biological role, synthesizes sphingolipids through transfer of a phosphatidyl head group from a glycerophospholipid on to the primary hydroxyl of a ceramide in the lumen of the endoplasmic reticulum. Catalyzes the synthesis of ceramide phosphoethanolamines (CPEs) (such as N-acylsphing-4-enine 1-phosphoethanolamine) by transferring phosphoethanolamine head group, which is smaller and more hydrophilic than the phosphocholine (PC) headgroup transferred in the canonical sphingomyelin synthesis (SMS) reaction by SMS1 or SMS2, from a phosphatidylethanolamine (1,2-diacyl-sn-glycero-3-phosphoethanolamine, PE) to a ceramide (such as N-acylsphing-4-enine). The larger PC prevents an efficient fit in the enzyme's catalytic pocket, leading to little or no SMS activity. In vitro, in the absence of ceramide, it has PLC activity with preference for phosphatidylinositol and phosphatidic acid, but also hydrolyzes phosphatidylethanolamine. The polypeptide is Sphingomyelin synthase-related protein 1 (Homo sapiens (Human)).